A 98-amino-acid polypeptide reads, in one-letter code: NADH-ubiquinone oxidoreductase chain 4L (98 aa).

Helical transmembrane passes span 1-21, 29-49, and 59-79; these read MSIV…GTLL, SLMC…LISL, and VPLI…ALLV.

The protein belongs to the complex I subunit 4L family. Core subunit of respiratory chain NADH dehydrogenase (Complex I) which is composed of 45 different subunits.

It localises to the mitochondrion inner membrane. It catalyses the reaction a ubiquinone + NADH + 5 H(+)(in) = a ubiquinol + NAD(+) + 4 H(+)(out). In terms of biological role, core subunit of the mitochondrial membrane respiratory chain NADH dehydrogenase (Complex I) which catalyzes electron transfer from NADH through the respiratory chain, using ubiquinone as an electron acceptor. Part of the enzyme membrane arm which is embedded in the lipid bilayer and involved in proton translocation. This chain is NADH-ubiquinone oxidoreductase chain 4L (MT-ND4L), found in Hemiechinus auritus (Long-eared hedgehog).